The sequence spans 196 residues: Carnitine operon protein CaiE (196 aa).

The segment at 173–196 (TQPLRQMEENRPRLQGTTDVTPKR) is disordered. The segment covering 187–196 (QGTTDVTPKR) has biased composition (polar residues).

The protein belongs to the transferase hexapeptide repeat family.

Its pathway is amine and polyamine metabolism; carnitine metabolism. Overproduction of CaiE stimulates the activity of CaiB and CaiD. The sequence is that of Carnitine operon protein CaiE from Shigella flexneri serotype 5b (strain 8401).